A 729-amino-acid chain; its full sequence is MPTGFVAPILCVLLPSPTREAATVASATGDSASERESAAPAAAPTAEAPPPSVVTRPEPQALPSPAIRAPLPDLYPFGTMRGGGFGDRDRDRDRGGFGARGGGGLPPKKFGNPGERLRKKKWDLSELPKFEKNFYVEHPEVARLTPYEVDELRRKKEITVRGGDVCPKPVFAFHHANFPQYVMDVLMDQHFTEPTPIQCQGFPLALSGRDMVGIAQTGSGKTLAYLLPAIVHINHQPYLERGDGPICLVLAPTRELAQQVQQVADDYGKCSRLKSTCIYGGAPKGPQIRDLERGVEICIATPGRLIDFLESGKTNLRRCTYLVLDEADRMLDMGFEPQIRKIVDQIRPDRQTLMWSATWPKEVRQLAEDFLRDYTQINVGNLELSANHNILQIVDVCMESEKDHKLIQLMEEIMAEKENKTIIFVETKRRCDDLTRRMRRDGWPAMCIHGDKSQPERDWVLNEFRSGKAPILIATDVASRGLDVEDVKFVINYDYPNSSEDYVHRIGRTARSTNKGTAYTFFTPGNLKQARELIKVLEEANQAINPKLMQLVDHRGGGGGGGGRSRYRTTSSANNPNLMYQDECDRRLRGVKDGGRRDSASYRDRSETDRAGYANGSGYGSPNSAFGAQAGQYTYGQGTYGAAAYGTSSYTAQEYGAGTYGASSTTSTGRSSQSSSQQFSGIGRSGQQPQPLMSQQFAQPPGATNMIGYMGQTAYQYPPPPPPPPPSRK.

The tract at residues Glu-20–Glu-115 is disordered. Ser-64 carries the post-translational modification Phosphoserine. The span at Gly-86 to Gly-95 shows a compositional bias: basic and acidic residues. A compositionally biased stretch (gly residues) spans Gly-96 to Leu-105. Residues Lys-108, Lys-109, and Lys-121 each carry the N6-acetyllysine; by EP300 modification. Residue Lys-129 forms a Glycyl lysine isopeptide (Lys-Gly) (interchain with G-Cter in SUMO); alternate linkage. Lys-129 is covalently cross-linked (Glycyl lysine isopeptide (Lys-Gly) (interchain with G-Cter in SUMO1); alternate). Residue Lys-129 forms a Glycyl lysine isopeptide (Lys-Gly) (interchain with G-Cter in SUMO2); alternate linkage. The short motif at Phe-171 to Cys-199 is the Q motif element. Residues Phe-202 to Ile-377 form the Helicase ATP-binding domain. Ala-215 to Thr-222 lines the ATP pocket. A DEAD box motif is present at residues Asp-325 to Asp-328. Residues Lys-405 to Val-552 enclose the Helicase C-terminal domain. Position 523 is a phosphothreonine (Thr-523). Lys-528 participates in a covalent cross-link: Glycyl lysine isopeptide (Lys-Gly) (interchain with G-Cter in SUMO2). The tract at residues Lys-547–Lys-729 is transactivation domain. Disordered regions lie at residues Leu-551 to Asn-623 and Thr-659 to Lys-729. A compositionally biased stretch (polar residues) spans Arg-568–Leu-578. Over residues Glu-583–Arg-610 the composition is skewed to basic and acidic residues. A compositionally biased stretch (low complexity) spans Thr-659–Gln-688. At Arg-684 the chain carries Omega-N-methylarginine. Residues Pro-689–Ala-698 are compositionally biased toward polar residues. Over residues Tyr-717–Lys-729 the composition is skewed to pro residues. Positions Pro-718–Pro-726 are interaction with YAP1.

This sequence belongs to the DEAD box helicase family. DDX5/DBP2 subfamily. Interacts with DDX5 in an RNA-independent manner. Interacts with CDK9 transcription elongation complex under basal conditions. Following cell stimulation with poly(I:C), a synthetic double-stranded RNA mimicking viral infection, the interaction with CDK9 is decreased. Interacts with ESR1 in an estrogen-independent manner. Interacts with HNRNPH1; this interaction is important for the regulation of alternative splicing on G-quadruplex structures. At high, but not low, cell density, interacts with DROSHA and DGCR8, the core components of the microprocessor complex involved in the maturation of primary microRNAs (pri-miRNAs) into pre-miRNAs. The interaction with DGCR8 is reduced during mitosis. At low, but not high, cell density, interacts with YAP1 and with its paralog, WWTR1/TAZ. Interactions with DROSHA and YAP1 are mutually exclusive. In vitro, the pre-miRNA processing activity of the DDX17-containing microprocessor complex is weaker than that of the DROSHA/DGCR8 microprocessor complex devoid of DDX17. Interacts with UPF3B. Interacts with NFAT5; this interaction leads to DDX17 recruitment to LNC2 and S100A4 promoters and NFAT5-mediated DDX17-enhanced transactivation. Interacts with HDAC1, HDAC2 and HDAC3; this interaction with HDAC1 and HDAC3, but not HDAC2, depends upon DDX17 acetylation. Interacts with ZC3HAV1 (via N-terminal domain) in an RNA-independent manner. Interacts with EXOSC3/RRP40 and EXOSC5/RRP46; this interaction may be indirect and mediated by ZC3HAV1-binding. Interacts with EP300; this interaction leads to acetylation at lysine residues. Interacts with CREBBP/CBP and KAT2B/P/CAF. Directly interacts with CTNNB1. Interacts with MYOD1. Interacts with TP53. Interacts with DCP1A in an RNA-independent manner. Interacts with DCP2 in an RNA-dependent manner. Interacts with DHX36; this interaction occurs in a RNA-dependent manner. Interacts with ERCC6. Sumoylation significantly increases stability. It also promotes interaction specifically with HDAC1 (but not HDAC2, nor HDAC3) and strongly stimulates ESR1 and TP53 coactivation. In terms of processing, acetylation at lysine residues stabilizes the protein, stimulates interaction with HDAC1 and HDAC3, but not HDAC2, and represses ESR1 and TP53 coactivation activity. In terms of tissue distribution, widely expressed. Low expression, if any, in normal colonic epithelial cells (at protein level). Levels tend to increase during colon cancer progression, from very low in benign hyperplastic polyps to very high in tubular and villous adenomas.

It is found in the nucleus. The protein localises to the nucleolus. Its subcellular location is the cytoplasm. It localises to the cytosol. It carries out the reaction ATP + H2O = ADP + phosphate + H(+). In terms of biological role, as an RNA helicase, unwinds RNA and alters RNA structures through ATP binding and hydrolysis. Involved in multiple cellular processes, including pre-mRNA splicing, alternative splicing, ribosomal RNA processing and miRNA processing, as well as transcription regulation. Regulates the alternative splicing of exons exhibiting specific features. For instance, promotes the inclusion of AC-rich alternative exons in CD44 transcripts. This function requires the RNA helicase activity. Affects NFAT5 and histone macro-H2A.1/MACROH2A1 alternative splicing in a CDK9-dependent manner. In NFAT5, promotes the introduction of alternative exon 4, which contains 2 stop codons and may target NFAT5 exon 4-containing transcripts to nonsense-mediated mRNA decay, leading to the down-regulation of NFAT5 protein. Affects splicing of mediators of steroid hormone signaling pathway, including kinases that phosphorylates ESR1, such as CDK2, MAPK1 and GSK3B, and transcriptional regulators, such as CREBBP, MED1, NCOR1 and NCOR2. By affecting GSK3B splicing, participates in ESR1 and AR stabilization. In myoblasts and epithelial cells, cooperates with HNRNPH1 to control the splicing of specific subsets of exons. In addition to binding mature mRNAs, also interacts with certain pri-microRNAs, including MIR663/miR-663a, MIR99B/miR-99b, and MIR6087/miR-6087. Binds pri-microRNAs on the 3' segment flanking the stem loop via the 5'-[ACG]CAUC[ACU]-3' consensus sequence. Required for the production of subsets of microRNAs, including MIR21 and MIR125B1. May be involved not only in microRNA primary transcript processing, but also stabilization. Participates in MYC down-regulation at high cell density through the production of MYC-targeting microRNAs. Along with DDX5, may be involved in the processing of the 32S intermediate into the mature 28S ribosomal RNA. Promoter-specific transcription regulator, functioning as a coactivator or corepressor depending on the context of the promoter and the transcriptional complex in which it exists. Enhances NFAT5 transcriptional activity. Synergizes with TP53 in the activation of the MDM2 promoter; this activity requires acetylation on lysine residues. May also coactivate MDM2 transcription through a TP53-independent pathway. Coactivates MMP7 transcription. Along with CTNNB1, coactivates MYC, JUN, FOSL1 and cyclin D1/CCND1 transcription. Alone or in combination with DDX5 and/or SRA1 non-coding RNA, plays a critical role in promoting the assembly of proteins required for the formation of the transcription initiation complex and chromatin remodeling leading to coactivation of MYOD1-dependent transcription. This helicase-independent activity is required for skeletal muscle cells to properly differentiate into myotubes. During epithelial-to-mesenchymal transition, coregulates SMAD-dependent transcriptional activity, directly controlling key effectors of differentiation, including miRNAs which in turn directly repress its expression. Plays a role in estrogen and testosterone signaling pathway at several levels. Mediates the use of alternative promoters in estrogen-responsive genes and regulates transcription and splicing of a large number of steroid hormone target genes. Contrary to splicing regulation activity, transcriptional coregulation of the estrogen receptor ESR1 is helicase-independent. Plays a role in innate immunity. Specifically restricts bunyavirus infection, including Rift Valley fever virus (RVFV) or La Crosse virus (LACV), but not vesicular stomatitis virus (VSV), in an interferon- and DROSHA-independent manner. Binds to RVFV RNA, likely via structured viral RNA elements. Promotes mRNA degradation mediated by the antiviral zinc-finger protein ZC3HAV1, in an ATPase-dependent manner. This is Probable ATP-dependent RNA helicase DDX17 (DDX17) from Homo sapiens (Human).